We begin with the raw amino-acid sequence, 145 residues long: Peptide methionine sulfoxide reductase MsrB (145 aa).

The MsrB domain maps to 6-129; that stretch reads KNERLQQLTD…NSAALRFIPV (124 aa). Residue Cys-118 is the Nucleophile of the active site.

It belongs to the MsrB Met sulfoxide reductase family.

The catalysed reaction is L-methionyl-[protein] + [thioredoxin]-disulfide + H2O = L-methionyl-(R)-S-oxide-[protein] + [thioredoxin]-dithiol. This is Peptide methionine sulfoxide reductase MsrB from Listeria monocytogenes serotype 4a (strain HCC23).